We begin with the raw amino-acid sequence, 424 residues long: MVSPLAVKGGEALRTRPWPAWPQPAPGVPAAVAEVLGSGRWSISGPYRGTDSHERRFARAFADYHGVPYCVPAASGTAGLMLALEACGVGAGDEVIVPGLSWVASGSTVLGVNAVPVFCDVDPDTLCVSPEAVEALITERTRAVVVVHLYSAVADMDGLTRVAERHGLPLVEDCAQAHGASYRGVKVGALATAGTFSMQHSKVLTSGEGGAVITRDADLARRVEHLRADGRCLSDGPPAPGAMELVETGELMGSNRCLSEFQAAILTEQLTLLDEQNRTRRANAARLDGLLGELGLRPQATSEGTTSRTYYTYAARLPEGALEDVPLTDVTGALTAELGFPVQPCYAPIPANRLYAPQTRRRYTLGPDHEARIDPKRFALPVCEDTARRTVTLHHAALLGDAEDMADIAAAFAKVLRHGADLAT.

Residue lysine 202 is modified to N6-(pyridoxal phosphate)lysine.

This sequence belongs to the DegT/DnrJ/EryC1 family. L-glutamine:2-deoxy-scyllo-inosose/scyllo-inosose aminotransferase subfamily. Pyridoxal 5'-phosphate is required as a cofactor.

It carries out the reaction 2-deoxy-L-scyllo-inosose + L-glutamine = 2-deoxy-scyllo-inosamine + 2-oxoglutaramate. The enzyme catalyses 3-amino-2,3-dideoxy-scyllo-inosose + L-glutamine = 2-deoxystreptamine + 2-oxoglutaramate. It participates in metabolic intermediate biosynthesis; 2-deoxystreptamine biosynthesis; 2-deoxystreptamine from D-glucose 6-phosphate: step 2/4. It functions in the pathway metabolic intermediate biosynthesis; 2-deoxystreptamine biosynthesis; 2-deoxystreptamine from D-glucose 6-phosphate: step 4/4. Its pathway is antibiotic biosynthesis; neomycin biosynthesis. In terms of biological role, catalyzes the PLP-dependent transamination of 2-deoxy-scyllo-inosose (2-DOI) to form 2-deoxy-scyllo-inosamine (2-DOIA) using L-glutamine as the amino donor. Also catalyzes the transamination of 3-amino-2,3-dideoxy-scyllo-inosose (keto-2-DOIA) into 2-deoxystreptamine (2-DOS). This is L-glutamine:2-deoxy-scyllo-inosose aminotransferase (neoB) from Streptomyces fradiae (Streptomyces roseoflavus).